A 314-amino-acid chain; its full sequence is tRNA dimethylallyltransferase (314 aa).

Gly12 to Thr19 provides a ligand contact to ATP. Thr14–Thr19 serves as a coordination point for substrate. Interaction with substrate tRNA regions lie at residues Asp37–Leu40 and Gln162–Arg166.

It belongs to the IPP transferase family. As to quaternary structure, monomer. The cofactor is Mg(2+).

The enzyme catalyses adenosine(37) in tRNA + dimethylallyl diphosphate = N(6)-dimethylallyladenosine(37) in tRNA + diphosphate. Its function is as follows. Catalyzes the transfer of a dimethylallyl group onto the adenine at position 37 in tRNAs that read codons beginning with uridine, leading to the formation of N6-(dimethylallyl)adenosine (i(6)A). This chain is tRNA dimethylallyltransferase, found in Acinetobacter baumannii (strain SDF).